The following is a 332-amino-acid chain: Fe(3+) dicitrate transport system permease protein FecC (332 aa).

Topologically, residues 1–7 are cytoplasmic; the sequence is MTAIKHP. The chain crosses the membrane as a helical span at residues 8-28; sequence VLLWGLPVAALIIIFWLSLFC. The Periplasmic portion of the chain corresponds to 29–64; sequence YSAIPVSGADATRALLPGHTPTLPEALVQNLRLPRS. The chain crosses the membrane as a helical span at residues 65-85; the sequence is LVAVLIGASLALAGTLLQTLT. Over 86-100 the chain is Cytoplasmic; it reads HNPMASPSLLGINSG. The helical transmembrane segment at 101–121 threads the bilayer; the sequence is AALAMALTSALSPTPIAGYSL. Ser-122 is a topological domain (periplasmic). The chain crosses the membrane as a helical span at residues 123 to 143; it reads FIAACGGGVSWLLVMTAGGGF. Residues 144-151 are Cytoplasmic-facing; it reads RHTHDRNK. The chain crosses the membrane as a helical span at residues 152–172; that stretch reads LILAGIALSAFCMGLTRITLL. The Periplasmic portion of the chain corresponds to 173 to 199; that stretch reads LAEDHAYGIFYWLAGGVSHARWQDVWQ. The helical transmembrane segment at 200-220 threads the bilayer; that stretch reads LLPVVVTAVPVVLLLANQLNL. The Cytoplasmic segment spans residues 221 to 244; it reads LNLSDSTAHTLGVNLTRLRLVINM. A helical transmembrane segment spans residues 245–265; sequence LVLLLVGACVSVAGPVAFIGL. The Periplasmic portion of the chain corresponds to 266–307; it reads LVPHLARFWAGFDQRNVLPVSMLLGATLMLLADVLARALAFP. A helical transmembrane segment spans residues 308–328; the sequence is GDLPAGAVLALIGSPCFVWLV. Residues 329–332 are Cytoplasmic-facing; sequence RRRG.

Belongs to the binding-protein-dependent transport system permease family. FecCD subfamily. As to quaternary structure, the complex is composed of two ATP-binding proteins (FecE), two transmembrane proteins (FecC and FecD) and a solute-binding protein (FecB). Interacts with FecB.

The protein resides in the cell inner membrane. In terms of biological role, part of the ABC transporter complex FecBCDE involved in citrate-dependent Fe(3+) uptake. Probably responsible for the translocation of the substrate across the membrane. The sequence is that of Fe(3+) dicitrate transport system permease protein FecC from Escherichia coli (strain K12).